The following is a 151-amino-acid chain: Large ribosomal subunit protein uL30 (151 aa).

The protein belongs to the universal ribosomal protein uL30 family. In terms of assembly, part of the 50S ribosomal subunit.

This Methanothrix thermoacetophila (strain DSM 6194 / JCM 14653 / NBRC 101360 / PT) (Methanosaeta thermophila) protein is Large ribosomal subunit protein uL30.